Here is a 300-residue protein sequence, read N- to C-terminus: Bifunctional protein FolD 2 (300 aa).

NADP(+) is bound by residues 166–168 (GRS), serine 191, and isoleucine 232.

It belongs to the tetrahydrofolate dehydrogenase/cyclohydrolase family. As to quaternary structure, homodimer.

It catalyses the reaction (6R)-5,10-methylene-5,6,7,8-tetrahydrofolate + NADP(+) = (6R)-5,10-methenyltetrahydrofolate + NADPH. The catalysed reaction is (6R)-5,10-methenyltetrahydrofolate + H2O = (6R)-10-formyltetrahydrofolate + H(+). It functions in the pathway one-carbon metabolism; tetrahydrofolate interconversion. In terms of biological role, catalyzes the oxidation of 5,10-methylenetetrahydrofolate to 5,10-methenyltetrahydrofolate and then the hydrolysis of 5,10-methenyltetrahydrofolate to 10-formyltetrahydrofolate. In Roseobacter denitrificans (strain ATCC 33942 / OCh 114) (Erythrobacter sp. (strain OCh 114)), this protein is Bifunctional protein FolD 2.